Here is a 534-residue protein sequence, read N- to C-terminus: Zinc finger protein 69 homolog B (534 aa).

Glycyl lysine isopeptide (Lys-Gly) (interchain with G-Cter in SUMO2) cross-links involve residues lysine 37 and lysine 40. Positions 74 to 145 (LTFKDVSVDF…ERDISGVPSS (72 aa)) constitute a KRAB domain. Glycyl lysine isopeptide (Lys-Gly) (interchain with G-Cter in SUMO2) cross-links involve residues lysine 178 and lysine 235. 9 consecutive C2H2-type zinc fingers follow at residues 279-301 (FECN…MRIH), 307-329 (FRCK…QRIH), 335-357 (YECK…VRIH), 363-385 (YECR…LRTH), 391-413 (FTCK…EIIH), 419-441 (YICN…QRTH), 447-469 (YKCK…QRVH), 475-497 (YECS…QRIH), and 503-525 (YDCN…CKTH).

The protein belongs to the krueppel C2H2-type zinc-finger protein family.

The protein localises to the nucleus. In terms of biological role, may be involved in transcriptional regulation. Essential for Golgi structural integrity. The polypeptide is Zinc finger protein 69 homolog B (ZFP69B) (Homo sapiens (Human)).